The chain runs to 228 residues: FAS1 domain-containing protein NCU02579 (228 aa).

A signal peptide spans 1-18 (MRFTPYLVLAPTAAVAFA). The tract at residues 50–74 (PAVGLGPAMPPSGAPQADGPANAGG) is disordered. Residues 77–225 (SVMLSDVMGR…GEVWILKGVR (149 aa)) enclose the FAS1 domain.

It is found in the vacuole. The polypeptide is FAS1 domain-containing protein NCU02579 (Neurospora crassa (strain ATCC 24698 / 74-OR23-1A / CBS 708.71 / DSM 1257 / FGSC 987)).